Reading from the N-terminus, the 505-residue chain is MAEFQGYLELDRSWKHDLLYPLIFREYIYVFAHDLGLNRSNLLENVGYDNKSSLLIVKRLISRMYQQNHFIISANDSNQNQLFGYNKNLYSQMISEGFAVIVEIPFSLRLVSSLKGTEIVKYYNLRSIHSIFPFLEDKFSQLNYVSDVLIPYPIHLEILVQTLRYWVKDASSLHLLRFFLHDYYNWNTLIIPNKYISIFSKSNPRLFLFLYNSHVCEYESILLFLRNQSSHLRLTSSGGFFERIYFYGKIKHPVEEVFANDSPTSLWFLEDLFMHYVRYQGKSILASKDTPLFMNKWKYYLVLLWQCHFYVWSQPGRMYINQLCKHSFSFLGYLSSMQINLSVVRSQMLENSFLMDNAMKKIDTLVPISLLIGSLDKMKFCNVLGHPVSKSTWADSSDFDIIDRFVCICRNLFHYYSGSSKKKSLYRIKYILRLSCVKTLARKPKSTVRTFLKKLGSNLLEEFFTEEEKVLSLIFPRTYSALRRSYKGRIWDLDIFCINDLVNHK.

It belongs to the intron maturase 2 family. MatK subfamily.

The protein localises to the plastid. The protein resides in the chloroplast. Functionally, usually encoded in the trnK tRNA gene intron. Probably assists in splicing its own and other chloroplast group II introns. The polypeptide is Maturase K (Morus alba (White mulberry)).